Reading from the N-terminus, the 613-residue chain is UvrABC system protein C (613 aa).

A GIY-YIG domain is found at 29 to 107; sequence DVAGVYKMLG…IKTLKPKYNI (79 aa). The UVR domain occupies 217–252; it reads KELQRELFDSMRKFSDNLDYESAMVYRDRLQALKSI.

It belongs to the UvrC family. As to quaternary structure, interacts with UvrB in an incision complex.

The protein localises to the cytoplasm. Its function is as follows. The UvrABC repair system catalyzes the recognition and processing of DNA lesions. UvrC both incises the 5' and 3' sides of the lesion. The N-terminal half is responsible for the 3' incision and the C-terminal half is responsible for the 5' incision. The polypeptide is UvrABC system protein C (Anaplasma marginale (strain St. Maries)).